Here is a 143-residue protein sequence, read N- to C-terminus: Transcriptional regulator MraZ (143 aa).

SpoVT-AbrB domains are found at residues 5 to 47 (TYTP…PRAE) and 76 to 119 (TDEQ…DAQA).

Belongs to the MraZ family. As to quaternary structure, forms oligomers.

It is found in the cytoplasm. The protein resides in the nucleoid. The polypeptide is Transcriptional regulator MraZ (Mycobacterium avium (strain 104)).